We begin with the raw amino-acid sequence, 83 residues long: Small ribosomal subunit protein uS15c (83 aa).

It belongs to the universal ribosomal protein uS15 family. In terms of assembly, part of the 30S ribosomal subunit.

The protein resides in the plastid. The protein localises to the chloroplast. This chain is Small ribosomal subunit protein uS15c (rps15), found in Fagopyrum esculentum subsp. ancestrale (Wild buckwheat).